Here is a 1612-residue protein sequence, read N- to C-terminus: DNA topoisomerase 2-beta (1612 aa).

Position 2 is an N-acetylalanine (Ala-2). Residue Lys-3 is modified to N6-acetyllysine. Residues Lys-21 and Lys-22 each participate in a glycyl lysine isopeptide (Lys-Gly) (interchain with G-Cter in SUMO2) cross-link. ATP contacts are provided by residues Asn-100, Asn-129, and 157–159 (SSN). Residues Lys-165 and Lys-166 each participate in a glycyl lysine isopeptide (Lys-Gly) (interchain with G-Cter in SUMO2) cross-link. 170–177 (GRNGYGAK) is a binding site for ATP. Glycyl lysine isopeptide (Lys-Gly) (interchain with G-Cter in SUMO2) cross-links involve residues Lys-216 and Lys-287. Positions 351–353 (KKK) are interaction with DNA. Glycyl lysine isopeptide (Lys-Gly) (interchain with G-Cter in SUMO2) cross-links involve residues Lys-355 and Lys-361. 385–387 (QTK) provides a ligand contact to ATP. Residues Lys-425, Lys-427, and Lys-434 each participate in a glycyl lysine isopeptide (Lys-Gly) (interchain with G-Cter in SUMO2) cross-link. The region spanning 464–581 (CTLILTEGDS…SLLKHGFLEE (118 aa)) is the Toprim domain. Residues Glu-470, Asp-550, and Asp-552 each contribute to the Mg(2+) site. Residues Lys-588, Lys-593, Lys-623, Lys-631, Lys-634, Lys-664, and Lys-700 each participate in a glycyl lysine isopeptide (Lys-Gly) (interchain with G-Cter in SUMO2) cross-link. One can recognise a Topo IIA-type catalytic domain in the interval 724 to 1177 (IPSLVDGFKP…SPSDLWKEDL (454 aa)). Tyr-814 (O-(5'-phospho-DNA)-tyrosine intermediate) is an active-site residue. An interaction with DNA region spans residues 999 to 1008 (KLQTTLTCNS). A Glycyl lysine isopeptide (Lys-Gly) (interchain with G-Cter in SUMO2) cross-link involves residue Lys-1080. A disordered region spans residues 1098 to 1128 (AWKEAQEKAAEEEDTQNQHDDSSSDSGTPSG). Residues Lys-1202, Lys-1205, Lys-1214, and Lys-1215 each participate in a glycyl lysine isopeptide (Lys-Gly) (interchain with G-Cter in SUMO2) cross-link. Ser-1224 is modified (phosphoserine). Glycyl lysine isopeptide (Lys-Gly) (interchain with G-Cter in SUMO2) cross-links involve residues Lys-1238, Lys-1250, and Lys-1259. The segment at 1245-1586 (LLKKKKGDPD…FTSEPPALPR (342 aa)) is disordered. At Thr-1280 the chain carries Phosphothreonine. Glycyl lysine isopeptide (Lys-Gly) (interchain with G-Cter in SUMO2) cross-links involve residues Lys-1311 and Lys-1315. Basic and acidic residues-rich tracts occupy residues 1322–1332 (PWSDDESKSES) and 1346–1358 (SLLR…RPKY). A phosphoserine mark is found at Ser-1324, Ser-1328, Ser-1330, Ser-1332, and Ser-1346. Tyr-1358 is subject to Phosphotyrosine. Acidic residues predominate over residues 1362 to 1379 (FSEEEEEDADDDDDNNDL). Ser-1363 is modified (phosphoserine). Lys-1385 is covalently cross-linked (Glycyl lysine isopeptide (Lys-Gly) (interchain with G-Cter in SUMO2)). Ser-1387 carries the phosphoserine modification. Thr-1390 bears the Phosphothreonine mark. Ser-1400 is subject to Phosphoserine. Phosphotyrosine is present on Tyr-1408. A Phosphoserine modification is found at Ser-1411. Positions 1417–1429 (ATPEKSSHDKKSQ) are enriched in basic and acidic residues. Lys-1427 is covalently cross-linked (Glycyl lysine isopeptide (Lys-Gly) (interchain with G-Cter in SUMO2)). 3 positions are modified to phosphoserine: Ser-1428, Ser-1439, and Ser-1441. A Glycyl lysine isopeptide (Lys-Gly) (interchain with G-Cter in SUMO2) cross-link involves residue Lys-1443. Residues 1443 to 1453 (KSEDDSAKFDS) show a composition bias toward basic and acidic residues. Residues Ser-1448, Ser-1453, and Ser-1460 each carry the phosphoserine modification. Lys-1477 is covalently cross-linked (Glycyl lysine isopeptide (Lys-Gly) (interchain with G-Cter in SUMO2)). An interaction with PLSCR1 region spans residues 1493-1499 (KAKRAPK). Phosphoserine occurs at positions 1509, 1511, and 1513. Residues 1526–1536 (GKGRGAKKRKA) are compositionally biased toward basic residues. Phosphoserine occurs at positions 1537 and 1539. Residues 1550–1561 (KPSKTASKKPKK) show a composition bias toward basic residues. Position 1562 is a phosphothreonine (Thr-1562). Ser-1563 and Ser-1568 each carry phosphoserine. The residue at position 1596 (Tyr-1596) is a Phosphotyrosine. Ser-1600 is modified (phosphoserine).

It belongs to the type II topoisomerase family. As to quaternary structure, homodimer. Interacts with PLSCR1 and KIAA1210. It depends on Mg(2+) as a cofactor. Mn(2+) is required as a cofactor. Ca(2+) serves as cofactor.

Its subcellular location is the nucleus. It localises to the nucleolus. It is found in the nucleoplasm. The enzyme catalyses ATP-dependent breakage, passage and rejoining of double-stranded DNA.. In terms of biological role, key decatenating enzyme that alters DNA topology by binding to two double-stranded DNA molecules, generating a double-stranded break in one of the strands, passing the intact strand through the broken strand, and religating the broken strand. The polypeptide is DNA topoisomerase 2-beta (TOP2B) (Cricetulus longicaudatus (Long-tailed dwarf hamster)).